The primary structure comprises 380 residues: Cytochrome b (380 aa).

Transmembrane regions (helical) follow at residues 33–53 (FGSLLGLCLMIQILTGLFLAM), 77–98 (WLIRYMHANGASMFFICLFLHV), 113–133 (WNMGIVLLFAVMATAFMGYVL), and 178–198 (FFAFHFILPFIITALVLVHLL). Residues histidine 83 and histidine 97 each coordinate heme b. Heme b-binding residues include histidine 182 and histidine 196. Histidine 201 lines the a ubiquinone pocket. Transmembrane regions (helical) follow at residues 226–246 (IKDLLGALLLLTALMILVLFF), 288–308 (LGGVLALILSILILAFMPLLH), 320–340 (ITQTMYWILVSDLLILTWIGG), and 347–367 (FIMIGQVASITYFAIIVIFMP).

This sequence belongs to the cytochrome b family. In terms of assembly, the cytochrome bc1 complex contains 11 subunits: 3 respiratory subunits (MT-CYB, CYC1 and UQCRFS1), 2 core proteins (UQCRC1 and UQCRC2) and 6 low-molecular weight proteins (UQCRH/QCR6, UQCRB/QCR7, UQCRQ/QCR8, UQCR10/QCR9, UQCR11/QCR10 and a cleavage product of UQCRFS1). This cytochrome bc1 complex then forms a dimer. The cofactor is heme b.

The protein localises to the mitochondrion inner membrane. In terms of biological role, component of the ubiquinol-cytochrome c reductase complex (complex III or cytochrome b-c1 complex) that is part of the mitochondrial respiratory chain. The b-c1 complex mediates electron transfer from ubiquinol to cytochrome c. Contributes to the generation of a proton gradient across the mitochondrial membrane that is then used for ATP synthesis. This Synaptomys borealis (Northern bog lemming) protein is Cytochrome b (MT-CYB).